Consider the following 65-residue polypeptide: Small ribosomal subunit protein bS21 (65 aa).

Residues 45–65 (GRLKRSRSKRRAQRANEERNS) form a disordered region. The segment covering 48 to 57 (KRSRSKRRAQ) has biased composition (basic residues).

The protein belongs to the bacterial ribosomal protein bS21 family.

The chain is Small ribosomal subunit protein bS21 from Chlorobium luteolum (strain DSM 273 / BCRC 81028 / 2530) (Pelodictyon luteolum).